The primary structure comprises 413 residues: Putative acid phosphatase 11 (413 aa).

The active-site Nucleophile is histidine 35. Residue aspartate 315 is the Proton donor of the active site. The cysteines at positions 381 and 387 are disulfide-linked.

The protein belongs to the histidine acid phosphatase family.

The catalysed reaction is a phosphate monoester + H2O = an alcohol + phosphate. The chain is Putative acid phosphatase 11 (pho-11) from Caenorhabditis elegans.